The primary structure comprises 201 residues: MICOS complex subunit MIC27 (201 aa).

A mitochondrion-targeting transit peptide spans 1–31; that stretch reads MTQDKPIVETISNAGEQVTNVFGQFWQLVTS. Residues 32-117 are Cytoplasmic-facing; that stretch reads KNTTNNGDSK…KCNAYLTEEW (86 aa). A helical membrane pass occupies residues 118–138; the sequence is TALPKAAAITVGGMAGFVLGL. Over 139–145 the chain is Mitochondrial intermembrane; the sequence is KRGPVGR. Residues 146 to 166 traverse the membrane as a helical segment; it reads LLTTTIGLATMAAFCYPIEAV. Residues 167–201 lie on the Cytoplasmic side of the membrane; it reads DVAKTGRAHAEQTWYSFQESPTPSAIVKTNLSPPK.

The protein belongs to the apolipoprotein O/MICOS complex subunit Mic27 family. Component of the mitochondrial contact site and cristae organizing system (MICOS) complex.

It is found in the mitochondrion outer membrane. Its function is as follows. Sustains mitochondrial morphology probably through maintaining cristae morphology. May act as a component of the MICOS complex, a large protein complex of the mitochondria. The sequence is that of MICOS complex subunit MIC27 from Caenorhabditis elegans.